Consider the following 136-residue polypeptide: Protein NrdI (136 aa).

The protein belongs to the NrdI family.

Its function is as follows. Probably involved in ribonucleotide reductase function. In Enterobacter sp. (strain 638), this protein is Protein NrdI.